A 565-amino-acid polypeptide reads, in one-letter code: Phosphomethylpyrimidine synthase (565 aa).

Residues N203, M232, Y261, H297, 317 to 319 (SRG), 358 to 361 (DGLR), and E397 contribute to the substrate site. A Zn(2+)-binding site is contributed by H401. Y424 provides a ligand contact to substrate. Zn(2+) is bound at residue H465. The [4Fe-4S] cluster site is built by C541, C544, and C549.

Belongs to the ThiC family. [4Fe-4S] cluster serves as cofactor.

The enzyme catalyses 5-amino-1-(5-phospho-beta-D-ribosyl)imidazole + S-adenosyl-L-methionine = 4-amino-2-methyl-5-(phosphooxymethyl)pyrimidine + CO + 5'-deoxyadenosine + formate + L-methionine + 3 H(+). The protein operates within cofactor biosynthesis; thiamine diphosphate biosynthesis. Catalyzes the synthesis of the hydroxymethylpyrimidine phosphate (HMP-P) moiety of thiamine from aminoimidazole ribotide (AIR) in a radical S-adenosyl-L-methionine (SAM)-dependent reaction. This Bacteroides thetaiotaomicron (strain ATCC 29148 / DSM 2079 / JCM 5827 / CCUG 10774 / NCTC 10582 / VPI-5482 / E50) protein is Phosphomethylpyrimidine synthase.